Reading from the N-terminus, the 320-residue chain is Glutathione synthetase (320 aa).

Residues 130 to 315 (KIFTSWFPDL…ITGMLLDYIE (186 aa)) enclose the ATP-grasp domain. 156-212 (WEKYQDIIIKPLDAMGGANIFRIKKNDPNFSVIVENMTNYERKYCMVQNYLPEIKLG) serves as a coordination point for ATP. Mg(2+)-binding residues include E286 and N288.

Belongs to the prokaryotic GSH synthase family. The cofactor is Mg(2+). It depends on Mn(2+) as a cofactor.

It carries out the reaction gamma-L-glutamyl-L-cysteine + glycine + ATP = glutathione + ADP + phosphate + H(+). The protein operates within sulfur metabolism; glutathione biosynthesis; glutathione from L-cysteine and L-glutamate: step 2/2. This Buchnera aphidicola subsp. Acyrthosiphon pisum (strain APS) (Acyrthosiphon pisum symbiotic bacterium) protein is Glutathione synthetase.